The primary structure comprises 431 residues: Chaperone SurA (431 aa).

A signal peptide spans 1 to 20 (MKLTVVTFALLAFISFNTFA). PpiC domains are found at residues 171-272 (QAEY…KIID) and 281-381 (VAEL…QLMD).

It localises to the periplasm. It catalyses the reaction [protein]-peptidylproline (omega=180) = [protein]-peptidylproline (omega=0). Its function is as follows. Chaperone involved in the correct folding and assembly of outer membrane proteins. Recognizes specific patterns of aromatic residues and the orientation of their side chains, which are found more frequently in integral outer membrane proteins. May act in both early periplasmic and late outer membrane-associated steps of protein maturation. This chain is Chaperone SurA, found in Pseudoalteromonas atlantica (strain T6c / ATCC BAA-1087).